The sequence spans 592 residues: A-type ATP synthase subunit A (592 aa).

233–240 (GPFGSGKT) serves as a coordination point for ATP.

This sequence belongs to the ATPase alpha/beta chains family. In terms of assembly, has multiple subunits with at least A(3), B(3), C, D, E, F, H, I and proteolipid K(x).

The protein resides in the cell membrane. The catalysed reaction is ATP + H2O + 4 H(+)(in) = ADP + phosphate + 5 H(+)(out). Its function is as follows. Component of the A-type ATP synthase that produces ATP from ADP in the presence of a proton gradient across the membrane. The A chain is the catalytic subunit. This Saccharolobus solfataricus (strain ATCC 35092 / DSM 1617 / JCM 11322 / P2) (Sulfolobus solfataricus) protein is A-type ATP synthase subunit A.